The primary structure comprises 177 residues: Large ribosomal subunit protein uL6 (177 aa).

The protein belongs to the universal ribosomal protein uL6 family. In terms of assembly, part of the 50S ribosomal subunit.

Functionally, this protein binds to the 23S rRNA, and is important in its secondary structure. It is located near the subunit interface in the base of the L7/L12 stalk, and near the tRNA binding site of the peptidyltransferase center. This is Large ribosomal subunit protein uL6 from Glaesserella parasuis serovar 5 (strain SH0165) (Haemophilus parasuis).